Consider the following 232-residue polypeptide: 5'-methylthioadenosine/S-adenosylhomocysteine nucleosidase (232 aa).

Glu12 serves as the catalytic Proton acceptor. Substrate is bound by residues Gly78, Met153, and 174 to 175; that span reads ME. Asp198 serves as the catalytic Proton donor.

The protein belongs to the PNP/UDP phosphorylase family. MtnN subfamily.

It carries out the reaction S-adenosyl-L-homocysteine + H2O = S-(5-deoxy-D-ribos-5-yl)-L-homocysteine + adenine. The catalysed reaction is S-methyl-5'-thioadenosine + H2O = 5-(methylsulfanyl)-D-ribose + adenine. The enzyme catalyses 5'-deoxyadenosine + H2O = 5-deoxy-D-ribose + adenine. It functions in the pathway amino-acid biosynthesis; L-methionine biosynthesis via salvage pathway; S-methyl-5-thio-alpha-D-ribose 1-phosphate from S-methyl-5'-thioadenosine (hydrolase route): step 1/2. In terms of biological role, catalyzes the irreversible cleavage of the glycosidic bond in both 5'-methylthioadenosine (MTA) and S-adenosylhomocysteine (SAH/AdoHcy) to adenine and the corresponding thioribose, 5'-methylthioribose and S-ribosylhomocysteine, respectively. Also cleaves 5'-deoxyadenosine, a toxic by-product of radical S-adenosylmethionine (SAM) enzymes, into 5-deoxyribose and adenine. This Hydrogenovibrio crunogenus (strain DSM 25203 / XCL-2) (Thiomicrospira crunogena) protein is 5'-methylthioadenosine/S-adenosylhomocysteine nucleosidase.